We begin with the raw amino-acid sequence, 71 residues long: Small ribosomal subunit protein bS21 (71 aa).

The segment covering 48–59 (KAAAAVKRHAKK) has biased composition (basic residues). A disordered region spans residues 48–71 (KAAAAVKRHAKKVQRENRKFQRLY). Positions 60–71 (VQRENRKFQRLY) are enriched in basic and acidic residues.

The protein belongs to the bacterial ribosomal protein bS21 family.

The polypeptide is Small ribosomal subunit protein bS21 (Saccharophagus degradans (strain 2-40 / ATCC 43961 / DSM 17024)).